Reading from the N-terminus, the 33-residue chain is Photosystem II reaction center protein Psb30 (33 aa).

The chain crosses the membrane as a helical span at residues 5–25 (VIAQLTVLALIVISGPLVIAL).

The protein belongs to the Psb30/Ycf12 family. As to quaternary structure, PSII is composed of 1 copy each of membrane proteins PsbA, PsbB, PsbC, PsbD, PsbE, PsbF, PsbH, PsbI, PsbJ, PsbK, PsbL, PsbM, PsbT, PsbX, PsbY, PsbZ, Psb30/Ycf12, peripheral proteins of the oxygen-evolving complex and a large number of cofactors. It forms dimeric complexes.

It localises to the plastid. The protein resides in the chloroplast thylakoid membrane. Its function is as follows. A core subunit of photosystem II (PSII), probably helps stabilize the reaction center. This Huperzia lucidula (Shining clubmoss) protein is Photosystem II reaction center protein Psb30.